A 404-amino-acid polypeptide reads, in one-letter code: MQQVKKVVLAYSGGVDTSVCIPYLKKEYGVSEVVTFVADLGQGEDLELIRQKALNSGASQSIVGNLVNSFVERYAFPAIRANALYLDKYPLSTALARPLIAENLVNIAREISADAVAHGCTGKGNDQVRFDLAINALGPDLKIITPAREWNMSREEAIEYGEKFGIPAPVSKKSPYSIDVNLLGRSIEAGILEDPMKEAPEDIFAMTSSIENSPDSPQEVEIIFKNGFPVGINDESLTPVEIIKKANVLAGEHGFGRIDMIEDRVVGIKSREIYETPGLLLLIKAHKELESITLNPDVVDFKGIVEKKWGQLVYQGFWFGPLKDSLDSFISSTQTAVNGRVKIRLHKGNAIVIGRMSENNSLYREDLATYSEEDVFNHSLAEGFIYMWGMSNKIWAELNSKTKD.

ATP contacts are provided by residues 10-18 and Ala-38; that span reads AYSGGVDTS. Tyr-89 contacts L-citrulline. Gly-119 contributes to the ATP binding site. 3 residues coordinate L-aspartate: Thr-121, Asn-125, and Asp-126. Asn-125 lines the L-citrulline pocket. Positions 129, 177, 186, 262, and 274 each coordinate L-citrulline.

Belongs to the argininosuccinate synthase family. Type 1 subfamily. Homotetramer.

The protein resides in the cytoplasm. The enzyme catalyses L-citrulline + L-aspartate + ATP = 2-(N(omega)-L-arginino)succinate + AMP + diphosphate + H(+). Its pathway is amino-acid biosynthesis; L-arginine biosynthesis; L-arginine from L-ornithine and carbamoyl phosphate: step 2/3. The protein is Argininosuccinate synthase of Prochlorococcus marinus (strain MIT 9301).